The chain runs to 218 residues: Large ribosomal subunit protein uL3 (218 aa).

The tract at residues 134-154 (GRASHGNSRSHNVPGSIGMAQ) is disordered. The residue at position 154 (glutamine 154) is an N5-methylglutamine.

This sequence belongs to the universal ribosomal protein uL3 family. In terms of assembly, part of the 50S ribosomal subunit. Forms a cluster with proteins L14 and L19. In terms of processing, methylated by PrmB.

One of the primary rRNA binding proteins, it binds directly near the 3'-end of the 23S rRNA, where it nucleates assembly of the 50S subunit. This chain is Large ribosomal subunit protein uL3, found in Polynucleobacter necessarius subsp. necessarius (strain STIR1).